Here is a 256-residue protein sequence, read N- to C-terminus: Thiazole synthase (256 aa).

The Schiff-base intermediate with DXP role is filled by Lys-95. Residues Gly-156, 182–183 (AG), and 204–205 (NT) contribute to the 1-deoxy-D-xylulose 5-phosphate site.

This sequence belongs to the ThiG family. As to quaternary structure, homotetramer. Forms heterodimers with either ThiH or ThiS.

It localises to the cytoplasm. The enzyme catalyses [ThiS sulfur-carrier protein]-C-terminal-Gly-aminoethanethioate + 2-iminoacetate + 1-deoxy-D-xylulose 5-phosphate = [ThiS sulfur-carrier protein]-C-terminal Gly-Gly + 2-[(2R,5Z)-2-carboxy-4-methylthiazol-5(2H)-ylidene]ethyl phosphate + 2 H2O + H(+). Its pathway is cofactor biosynthesis; thiamine diphosphate biosynthesis. Catalyzes the rearrangement of 1-deoxy-D-xylulose 5-phosphate (DXP) to produce the thiazole phosphate moiety of thiamine. Sulfur is provided by the thiocarboxylate moiety of the carrier protein ThiS. In vitro, sulfur can be provided by H(2)S. The protein is Thiazole synthase of Salmonella arizonae (strain ATCC BAA-731 / CDC346-86 / RSK2980).